The sequence spans 65 residues: Large ribosomal subunit protein uL30 (65 aa).

It belongs to the universal ribosomal protein uL30 family. In terms of assembly, part of the 50S ribosomal subunit.

The polypeptide is Large ribosomal subunit protein uL30 (Onion yellows phytoplasma (strain OY-M)).